A 305-amino-acid chain; its full sequence is Ornithine carbamoyltransferase, catabolic (305 aa).

Carbamoyl phosphate is bound by residues 50-53 (STRT), glutamine 77, arginine 101, and 128-131 (HPLQ). Residues asparagine 159, aspartate 223, and 227 to 228 (SM) each bind L-ornithine. Residues 263-264 (CL) and arginine 291 contribute to the carbamoyl phosphate site.

Belongs to the aspartate/ornithine carbamoyltransferase superfamily. OTCase family.

It is found in the cytoplasm. It carries out the reaction carbamoyl phosphate + L-ornithine = L-citrulline + phosphate + H(+). The protein operates within amino-acid degradation; L-arginine degradation via ADI pathway; carbamoyl phosphate from L-arginine: step 2/2. Functionally, reversibly catalyzes the transfer of the carbamoyl group from carbamoyl phosphate (CP) to the N(epsilon) atom of ornithine (ORN) to produce L-citrulline. This chain is Ornithine carbamoyltransferase, catabolic, found in Thermoplasma acidophilum (strain ATCC 25905 / DSM 1728 / JCM 9062 / NBRC 15155 / AMRC-C165).